The chain runs to 381 residues: Acetylornithine deacetylase (381 aa).

H79 is a Zn(2+) binding site. D81 is a catalytic residue. Zn(2+) is bound at residue D111. E143 is a catalytic residue. Positions 144, 168, and 354 each coordinate Zn(2+).

The protein belongs to the peptidase M20A family. ArgE subfamily. As to quaternary structure, homodimer. It depends on Zn(2+) as a cofactor. Co(2+) is required as a cofactor. The cofactor is glutathione.

It localises to the cytoplasm. It catalyses the reaction N(2)-acetyl-L-ornithine + H2O = L-ornithine + acetate. It participates in amino-acid biosynthesis; L-arginine biosynthesis; L-ornithine from N(2)-acetyl-L-ornithine (linear): step 1/1. Catalyzes the hydrolysis of the amide bond of N(2)-acetylated L-amino acids. Cleaves the acetyl group from N-acetyl-L-ornithine to form L-ornithine, an intermediate in L-arginine biosynthesis pathway, and a branchpoint in the synthesis of polyamines. The chain is Acetylornithine deacetylase from Buchnera aphidicola subsp. Acyrthosiphon pisum (strain Tuc7).